Consider the following 324-residue polypeptide: Glyoxylate/hydroxypyruvate reductase B (324 aa).

Catalysis depends on residues arginine 237 and glutamate 266. The Proton donor role is filled by histidine 285.

It belongs to the D-isomer specific 2-hydroxyacid dehydrogenase family. GhrB subfamily. As to quaternary structure, homodimer.

The protein localises to the cytoplasm. The enzyme catalyses glycolate + NADP(+) = glyoxylate + NADPH + H(+). It carries out the reaction (R)-glycerate + NAD(+) = 3-hydroxypyruvate + NADH + H(+). The catalysed reaction is (R)-glycerate + NADP(+) = 3-hydroxypyruvate + NADPH + H(+). Catalyzes the NADPH-dependent reduction of glyoxylate and hydroxypyruvate into glycolate and glycerate, respectively. This is Glyoxylate/hydroxypyruvate reductase B from Escherichia fergusonii (strain ATCC 35469 / DSM 13698 / CCUG 18766 / IAM 14443 / JCM 21226 / LMG 7866 / NBRC 102419 / NCTC 12128 / CDC 0568-73).